Consider the following 421-residue polypeptide: MDKLIITGGIRLDGEIRISGAKNSALPILAATLLADTPVTVCNLPHLHDITTMIELFGRMGVQPIIDEKLSVEVDASSIKTLVAPYELVKTMRASILVLGPMVARFGEAEVALPGGCAIGSRPVDLHIRGLEAMGAKIDVEGGYIKAKAPAGGLRGAHFFFDTVSVTGTENIMMAAALANGRSVLENAAREPEVVDLANFLNAMGAKVSGAGTDTIVIDGVKRLGGGRYSVMPDRIETGTYLVAAAATGGRVRLKDTDATLLEAVLHKLVEAGAHIDTGSDWIELDMKGKRPKAVNVRTAPYPAFPTDMQAQFIALNAIAEGTGTVIETVFENRFMHVYEMNRMGAQILVEGNTAIVTGVDHLKGAPVMATDLRASASLVIAGLVAEGDTLIDRIYHIDRGYECIEEKLQLLGAKIRRVPG.

22–23 (KN) contacts phosphoenolpyruvate. Arginine 93 contacts UDP-N-acetyl-alpha-D-glucosamine. Residue cysteine 117 is the Proton donor of the active site. Residue cysteine 117 is modified to 2-(S-cysteinyl)pyruvic acid O-phosphothioketal. UDP-N-acetyl-alpha-D-glucosamine contacts are provided by residues 122–126 (RPVDL), aspartate 308, and valine 330.

This sequence belongs to the EPSP synthase family. MurA subfamily.

It is found in the cytoplasm. The enzyme catalyses phosphoenolpyruvate + UDP-N-acetyl-alpha-D-glucosamine = UDP-N-acetyl-3-O-(1-carboxyvinyl)-alpha-D-glucosamine + phosphate. It functions in the pathway cell wall biogenesis; peptidoglycan biosynthesis. Functionally, cell wall formation. Adds enolpyruvyl to UDP-N-acetylglucosamine. This chain is UDP-N-acetylglucosamine 1-carboxyvinyltransferase, found in Stutzerimonas stutzeri (strain A1501) (Pseudomonas stutzeri).